The following is a 373-amino-acid chain: Late expression factor 3 (373 aa).

The protein belongs to the baculoviridae LEF-3 family. As to quaternary structure, interacts with alkaline nuclease.

Its subcellular location is the host nucleus. Functionally, required for late and very late gene expression. Lef-3 could be a single-stranded DNA-binding protein. This Orgyia pseudotsugata (Douglas-fir tussock moth) protein is Late expression factor 3 (LEF-3).